We begin with the raw amino-acid sequence, 387 residues long: Leucine aminopeptidase 1 (387 aa).

A signal peptide spans 1 to 18; the sequence is MKIRAALALSATASGVLA. The propeptide occupies 19-87; it reads AVVPQQALLN…YPTLHQASNV (69 aa). Asn179 carries an N-linked (GlcNAc...) asparagine glycan. Zn(2+) is bound by residues His187, Asp206, Glu245, and Asp272. Residues Cys321 and Cys325 are joined by a disulfide bond. His354 contributes to the Zn(2+) binding site.

This sequence belongs to the peptidase M28 family. M28E subfamily. Monomer. Zn(2+) is required as a cofactor.

The protein resides in the secreted. Its function is as follows. Extracellular aminopeptidase that allows assimilation of proteinaceous substrates. This is Leucine aminopeptidase 1 (lap1) from Aspergillus oryzae (strain ATCC 42149 / RIB 40) (Yellow koji mold).